The chain runs to 524 residues: Probable serine/threonine-protein kinase WNK10 (524 aa).

The region spanning isoleucine 16 to leucine 273 is the Protein kinase domain. Residues threonine 96–phenylalanine 99 and lysine 146 contribute to the ATP site. The active-site Proton acceptor is the aspartate 163. Serine 477 carries the phosphoserine modification. A coiled-coil region spans residues serine 480–leucine 523.

Belongs to the protein kinase superfamily. Ser/Thr protein kinase family. WNK subfamily.

The enzyme catalyses L-seryl-[protein] + ATP = O-phospho-L-seryl-[protein] + ADP + H(+). It catalyses the reaction L-threonyl-[protein] + ATP = O-phospho-L-threonyl-[protein] + ADP + H(+). In terms of biological role, may regulate flowering time by modulating the photoperiod pathway. The sequence is that of Probable serine/threonine-protein kinase WNK10 (WNK10) from Arabidopsis thaliana (Mouse-ear cress).